We begin with the raw amino-acid sequence, 803 residues long: MTVSFENKDFNQFINSSKFLVEYDVTSALEQEGLKQSDYAEICRRLNRAPNRNELGMFGVMWSEHCCYRNSRPLLKNFPTTGSRILVGPGENAGVVDIGFGQRLVFKIESHNHPSAVEPFQGAATGVGGILRDIFTMGARPIALLNALRFGPLDDEKNISLLEGVVAGISHYGNCVGVPTIGGEVGFDSSYSGNPLVNAMALGLMETEEIVCSGASGIGFPVLYVGNTTGRDGMGGASFASSELSKTSIDDRPAVQVGDPFLEKGLIEACLEAFKTGYVIAAQDMGAAGLTCSCSEMASKGEVGIELNLDLVPAREKGMTAYEFLLSESQERMLFVVKPGSEEELRELFIRWGLYVEVVGKVLKEKVVRVIHKGEVVANLPASALADDTPIEEHLLINSTPEYLQEHWKWTEDLLPKTLDDGIINIKNNLFISWNNVLLELLSIPSIASKNWIYKQYDFQVQSNTVVSPGEADAAVIRIRSQNDFSTKPKKDRGIASVVDCNDRWVYLDPQRGSMSAVAEAARNLSAVGAEPIAITNNLNFSSPDKAVGFWQLSMSCEGITKACLALNTPVTGGNVSLYNDTKLPNNTVIPIHPTPVIGMVGLIEDINKICKKSWVKAEDQIWMIGLPLENNINQDERISLSASSFLEYIHGLKTGRPPEIDLNLEKQVHAFLREVIKQGIVNSAHDLGDGGLTVAIADCCISSGYGANIILPPSQSRLDRLLFAEGGARVLVSCSTDQSVELKKYYKNISLQGSILFSISHLGNVNNQKKLLVSQSNNTIIDVNILDLKDTYKDAIHKKITK.

H65 is an active-site residue. The ATP site is built by Y68 and K107. E109 is a binding site for Mg(2+). Substrate is bound by residues 110–113 and R132; that span reads SHNH. H111 serves as the catalytic Proton acceptor. D133 serves as a coordination point for Mg(2+). Q256 contacts substrate. Position 284 (D284) interacts with Mg(2+). 328–330 contributes to the substrate binding site; the sequence is ESQ. ATP contacts are provided by N537 and G574. Residue N575 participates in Mg(2+) binding. S577 contacts substrate.

This sequence belongs to the FGAMS family. Monomer. Part of the FGAM synthase complex composed of 1 PurL, 1 PurQ and 2 PurS subunits.

The protein localises to the cytoplasm. It catalyses the reaction N(2)-formyl-N(1)-(5-phospho-beta-D-ribosyl)glycinamide + L-glutamine + ATP + H2O = 2-formamido-N(1)-(5-O-phospho-beta-D-ribosyl)acetamidine + L-glutamate + ADP + phosphate + H(+). The protein operates within purine metabolism; IMP biosynthesis via de novo pathway; 5-amino-1-(5-phospho-D-ribosyl)imidazole from N(2)-formyl-N(1)-(5-phospho-D-ribosyl)glycinamide: step 1/2. Its function is as follows. Part of the phosphoribosylformylglycinamidine synthase complex involved in the purines biosynthetic pathway. Catalyzes the ATP-dependent conversion of formylglycinamide ribonucleotide (FGAR) and glutamine to yield formylglycinamidine ribonucleotide (FGAM) and glutamate. The FGAM synthase complex is composed of three subunits. PurQ produces an ammonia molecule by converting glutamine to glutamate. PurL transfers the ammonia molecule to FGAR to form FGAM in an ATP-dependent manner. PurS interacts with PurQ and PurL and is thought to assist in the transfer of the ammonia molecule from PurQ to PurL. The sequence is that of Phosphoribosylformylglycinamidine synthase subunit PurL from Prochlorococcus marinus (strain NATL2A).